The following is a 166-amino-acid chain: NAD(P)H-quinone oxidoreductase subunit I, chloroplastic (166 aa).

2 consecutive 4Fe-4S ferredoxin-type domains span residues 55-84 (GRIH…VDWK) and 95-124 (LNYS…MTEE). The [4Fe-4S] cluster site is built by cysteine 64, cysteine 67, cysteine 70, cysteine 74, cysteine 104, cysteine 107, cysteine 110, and cysteine 114.

The protein belongs to the complex I 23 kDa subunit family. NDH is composed of at least 16 different subunits, 5 of which are encoded in the nucleus. It depends on [4Fe-4S] cluster as a cofactor.

Its subcellular location is the plastid. The protein resides in the chloroplast thylakoid membrane. The catalysed reaction is a plastoquinone + NADH + (n+1) H(+)(in) = a plastoquinol + NAD(+) + n H(+)(out). It catalyses the reaction a plastoquinone + NADPH + (n+1) H(+)(in) = a plastoquinol + NADP(+) + n H(+)(out). Functionally, NDH shuttles electrons from NAD(P)H:plastoquinone, via FMN and iron-sulfur (Fe-S) centers, to quinones in the photosynthetic chain and possibly in a chloroplast respiratory chain. The immediate electron acceptor for the enzyme in this species is believed to be plastoquinone. Couples the redox reaction to proton translocation, and thus conserves the redox energy in a proton gradient. The sequence is that of NAD(P)H-quinone oxidoreductase subunit I, chloroplastic from Ambrosia trifida (Giant ragweed).